The chain runs to 655 residues: Integrin beta-5 (655 aa).

Positions aspartate 1–isoleucine 234 constitute a VWFA domain. Residues aspartate 1 to asparagine 575 are Extracellular-facing. Residues serine 3 and serine 5 each coordinate Mg(2+). Positions 5, 8, 9, and 40 each coordinate Ca(2+). The cysteines at positions 58 and 67 are disulfide-linked. Ca(2+) is bound by residues asparagine 98, aspartate 100, proline 102, and glutamate 103. Glutamate 103 serves as a coordination point for Mg(2+). The cysteines at positions 115 and 156 are disulfide-linked. Residue asparagine 203 is glycosylated (N-linked (GlcNAc...) asparagine). Glycine 218 is a Ca(2+) binding site. Intrachain disulfides connect cysteine 257–cysteine 269, cysteine 289–cysteine 317, cysteine 321–cysteine 340, cysteine 332–cysteine 343, cysteine 345–cysteine 354, cysteine 356–cysteine 386, cysteine 369–cysteine 384, cysteine 378–cysteine 389, cysteine 391–cysteine 404, cysteine 406–cysteine 427, cysteine 411–cysteine 425, cysteine 419–cysteine 430, and cysteine 432–cysteine 441. Residue asparagine 316 is glycosylated (N-linked (GlcNAc...) asparagine). 4 I-EGF domains span residues cysteine 321 to glutamate 355, cysteine 356 to glutamate 405, cysteine 406 to asparagine 442, and cysteine 443 to glutamate 482. N-linked (GlcNAc...) asparagine glycosylation is present at asparagine 408. An N-linked (GlcNAc...) asparagine glycan is attached at asparagine 442. 9 cysteine pairs are disulfide-bonded: cysteine 443–cysteine 466, cysteine 450–cysteine 464, cysteine 458–cysteine 469, cysteine 471–cysteine 481, cysteine 484–cysteine 487, cysteine 491–cysteine 538, cysteine 497–cysteine 517, cysteine 500–cysteine 513, and cysteine 546–cysteine 570. N-linked (GlcNAc...) asparagine glycans are attached at residues asparagine 510 and asparagine 561. Residues alanine 576–tryptophan 598 traverse the membrane as a helical segment. Over lysine 599 to aspartate 655 the chain is Cytoplasmic. Serine 626 is modified (phosphoserine).

The protein belongs to the integrin beta chain family. In terms of assembly, heterodimer of an alpha and a beta subunit. Beta-5 (ITGB5) associates with alpha-V (ITGAV). Interacts with MYO10. Interacts with DAB2. Integrin ITGAV:ITGB5 interacts with FBLN5 (via N-terminus). ITGAV:ITGB5 interacts with CCN3. Interacts with tensin TNS3; TNS3 also interacts with PEAK1, thus acting as an adapter molecule to bridge the association of PEAK1 with ITGB5.

The protein localises to the cell membrane. Functionally, integrin alpha-V/beta-5 (ITGAV:ITGB5) is a receptor for fibronectin. It recognizes the sequence R-G-D in its ligand. The protein is Integrin beta-5 (ITGB5) of Papio cynocephalus (Yellow baboon).